The primary structure comprises 136 residues: Large ribosomal subunit protein bL17 (136 aa).

It belongs to the bacterial ribosomal protein bL17 family. As to quaternary structure, part of the 50S ribosomal subunit. Contacts protein L32.

The sequence is that of Large ribosomal subunit protein bL17 from Rhodopseudomonas palustris (strain BisB5).